Consider the following 522-residue polypeptide: AAA ATPase forming ring-shaped complexes (522 aa).

Residues 1–26 (MGQEKHTDAASQSRDPEAVAAHENDQ) form a disordered region. Residues 20 to 57 (AAHENDQLRQRNHALAKALTRATEELRKAKAQLEQFMA) adopt a coiled-coil conformation. 248–253 (GNGKTL) provides a ligand contact to ATP.

This sequence belongs to the AAA ATPase family. As to quaternary structure, homohexamer. Assembles into a hexameric ring structure.

The chain is AAA ATPase forming ring-shaped complexes from Bifidobacterium animalis subsp. lactis (strain AD011).